The following is a 273-amino-acid chain: MAAVVPRFDDVYKNAQRRILDQETFFSRGLGRPLMKNTYLFDNYAYGWIPETAIWSSRYANLDASDYYPISLGLLKKFKFLMSLYKGPIPVYEEKVNTEFIANGSFSGRYVSYLRKFSALPTNEFISFLLLTSIPIYNILFWFKNTQFDITKHTLFRYVYTDNAKHLALARYMHQTGDYKPLFSRLKENYIFTGPVPIGIKDIDHPNLSRARSPSDYETLANISTILYFTKYDPVLMFLLFYVPGYSITTKITPAVEYLMDKLKLTKNDVQLL.

A run of 2 helical transmembrane segments spans residues 123–143 (NEFI…LFWF) and 223–243 (ISTI…LFYV).

Belongs to the orthopoxvirus OPG070 family. In terms of processing, phosphorylated by OPG054 kinase in vitro.

The protein localises to the virion. It localises to the host endoplasmic reticulum membrane. Its subcellular location is the host cytoplasm. Its function is as follows. May play a role in the biogenesis of the viral factories by recruiting and wrapping DNA replication sites in endoplasmic reticulum derived membranes. Later in infection, phosphorylation by the late viral kinase OPG054 might decrease DNA-binding ability and trigger ER membranes disassembly. Binds DNA in vitro. This Variola virus (isolate Human/India/Ind3/1967) (VARV) protein is Protein OPG070 (OPG070).